The sequence spans 96 residues: uncharacterized protein (96 aa).

This is an uncharacterized protein from Bacillus subtilis (strain 168).